Here is a 531-residue protein sequence, read N- to C-terminus: MASFVDRVIVHATGGNGGHGCVSVKREKFKPLGGPDGGNGGDGGSVILRVDGQSTTLLGFHHAPHQKAPNGEPGKGDMRHGFKGQDLVLSVPDGTVVKDREGNVLADLLGEGSEYVLAAGGQGGRGNAALASPKRKAPGFALLGTPGEEQEVELELKSIADIALVGFPSAGKSSLIAAMSAARPKIADYPFTTLVPNLGVVQAGDTRFTVADVPGLIPGASEGKGLGLEFLRHVERCAALVHVIDCATLEPGRDPLTDLDALEEELAHYAQDIADEDPSSIPLTQRPRLVVLNKVDVPEARELADFVRVELEQRGYPVFEISTASHEGLRELSFAMAALVSEARAQEEQREQQRQTVPVLQPEPVRRRRGRDRREFVITREDRAEEPLYHVRGEKPERWVLQTDFNNDEAVGYLADRFAKLGIEDELFRIGAKPGNAVLIGPEENGVVFDWEPTMVGGAELLGGPRGSDLRLEETSRPTRREKREQFYDRMDAKSEARAELEQERRAGVWTESVDARDRRRTSETKETNEK.

The Obg domain maps to 2–159 (ASFVDRVIVH…QEVELELKSI (158 aa)). In terms of domain architecture, OBG-type G spans 160-341 (ADIALVGFPS…LSFAMAALVS (182 aa)). Residues 166 to 173 (GFPSAGKS), 191 to 195 (FTTLV), 212 to 215 (DVPG), 293 to 296 (NKVD), and 322 to 324 (STA) each bind GTP. Mg(2+)-binding residues include serine 173 and threonine 193. The disordered stretch occupies residues 346 to 365 (QEEQREQQRQTVPVLQPEPV). The 86-residue stretch at 368–453 (RRGRDRREFV…ENGVVFDWEP (86 aa)) folds into the OCT domain. The interval 459-531 (AELLGGPRGS…TSETKETNEK (73 aa)) is disordered. Composition is skewed to basic and acidic residues over residues 468–507 (SDLR…ERRA) and 514–531 (VDAR…TNEK).

The protein belongs to the TRAFAC class OBG-HflX-like GTPase superfamily. OBG GTPase family. As to quaternary structure, monomer. The cofactor is Mg(2+).

Its subcellular location is the cytoplasm. Functionally, an essential GTPase which binds GTP, GDP and possibly (p)ppGpp with moderate affinity, with high nucleotide exchange rates and a fairly low GTP hydrolysis rate. Plays a role in control of the cell cycle, stress response, ribosome biogenesis and in those bacteria that undergo differentiation, in morphogenesis control. The polypeptide is GTPase Obg (Kocuria rhizophila (strain ATCC 9341 / DSM 348 / NBRC 103217 / DC2201)).